A 1437-amino-acid polypeptide reads, in one-letter code: Myomesin-3 (1437 aa).

A disordered region spans residues 1–49 (MTLPHSLGGAGDPRPPQAMEVHRLEHRQEEEQKEERQHSLRMGSSVRRR). Over residues 20–38 (EVHRLEHRQEEEQKEERQH) the composition is skewed to basic and acidic residues. A coiled-coil region spans residues 120 to 149 (RLLRQRRDWKTLRRRTEEKVQEAKELRELC). Ig-like C2-type domains follow at residues 154–246 (PWFW…AKVL) and 269–361 (PSVE…TYVL). Fibronectin type-III domains lie at 375-469 (SPLN…VMGD), 503-598 (PPTN…LRGP), 604-696 (PPAQ…VKQA), 702-797 (APYG…CKEW), and 804-899 (PPYD…LEDK). Ig-like C2-type domains follow at residues 1120–1205 (PYFE…LDLT) and 1334–1423 (AKVV…VTIS).

Homodimer.

The protein localises to the cytoplasm. It localises to the myofibril. The protein resides in the sarcomere. It is found in the m line. Its function is as follows. May link the intermediate filament cytoskeleton to the M-disk of the myofibrils in striated muscle. In Homo sapiens (Human), this protein is Myomesin-3 (MYOM3).